We begin with the raw amino-acid sequence, 892 residues long: LEAF RUST 10 DISEASE-RESISTANCE LOCUS RECEPTOR-LIKE PROTEIN KINASE-like 2.8 (892 aa).

A signal peptide spans 1-27 (MYYHSLSSYSILFFLFSLFHHLPCASS). Residues 28–496 (NQGLGWCESL…RFIATLVRYT (469 aa)) are Extracellular-facing. N-linked (GlcNAc...) asparagine glycosylation is found at asparagine 42, asparagine 71, asparagine 88, asparagine 112, asparagine 186, asparagine 222, asparagine 230, asparagine 286, asparagine 358, asparagine 384, asparagine 407, and asparagine 458. Residues 497 to 517 (FIALGALTGVVIVFLVLLCPC) form a helical membrane-spanning segment. The Cytoplasmic portion of the chain corresponds to 518–892 (FRVQIFRKRK…TNSKLESSSL (375 aa)). Threonine 547 carries the post-translational modification Phosphothreonine. The Protein kinase domain maps to 556–854 (KSFTEVVGRG…ALEVPPRPVL (299 aa)). ATP is bound by residues 562–570 (VGRGGFGIV) and lysine 584. A Phosphotyrosine modification is found at tyrosine 629. Aspartate 680 acts as the Proton acceptor in catalysis. A phosphothreonine mark is found at threonine 717 and threonine 720.

The protein belongs to the protein kinase superfamily. Ser/Thr protein kinase family.

The protein resides in the membrane. The catalysed reaction is L-seryl-[protein] + ATP = O-phospho-L-seryl-[protein] + ADP + H(+). It catalyses the reaction L-threonyl-[protein] + ATP = O-phospho-L-threonyl-[protein] + ADP + H(+). This Arabidopsis thaliana (Mouse-ear cress) protein is LEAF RUST 10 DISEASE-RESISTANCE LOCUS RECEPTOR-LIKE PROTEIN KINASE-like 2.8.